Consider the following 149-residue polypeptide: Calmodulin-2 (149 aa).

The residue at position 2 (Ala-2) is an N-acetylalanine. EF-hand domains are found at residues 8 to 43, 44 to 79, 81 to 116, and 117 to 149; these read EQIAEFKEAFSLFDKDGNGNITTKELGTVMRSLGQN, PTEGELQDMINEVDADGNGTIDFPEFLTMMARKMKD, DSEEEIREAFKVFDKDGNGFISAAELRHVMTNPGEK, and LTDEEVDEMIREADIDGDGQVNYEEFVKMMTSK. Ca(2+) contacts are provided by Asp-21, Asp-23, Asn-25, Asn-27, Glu-32, Asp-57, Asp-59, Asn-61, Thr-63, Glu-68, Asp-94, Asp-96, Asn-98, and Glu-105. Lys-116 is subject to N6,N6,N6-trimethyllysine. Ca(2+) contacts are provided by Asp-130, Asp-132, Asp-134, Gln-136, and Glu-141.

The protein belongs to the calmodulin family.

Its function is as follows. Calmodulin mediates the control of a large number of enzymes, ion channels and other proteins by Ca(2+). Among the enzymes to be stimulated by the calmodulin-Ca(2+) complex are a number of protein kinases and phosphatases. The chain is Calmodulin-2 (CAM2) from Branchiostoma floridae (Florida lancelet).